Reading from the N-terminus, the 101-residue chain is MAKNSMVERDRKRRKLAQKYSAKRERLKAIIESPESSVEERFEAQLKLQQIPRNASPVRQRNRCAKSGRPRGYYRKFGLARNELRRAAMNGEIPGLTLSSW.

A compositionally biased stretch (basic and acidic residues) spans 1 to 10 (MAKNSMVERD). Residues 1–20 (MAKNSMVERDRKRRKLAQKY) are disordered.

Belongs to the universal ribosomal protein uS14 family. In terms of assembly, part of the 30S ribosomal subunit. Contacts proteins S3 and S10.

Its function is as follows. Binds 16S rRNA, required for the assembly of 30S particles and may also be responsible for determining the conformation of the 16S rRNA at the A site. In Halorhodospira halophila (strain DSM 244 / SL1) (Ectothiorhodospira halophila (strain DSM 244 / SL1)), this protein is Small ribosomal subunit protein uS14.